Consider the following 522-residue polypeptide: Amphoterin-induced protein 2 (522 aa).

The first 39 residues, 1–39 (MSLRVHTLPTLLGAVVRPGCRELLCLLMITVTVGPGASG), serve as a signal peptide directing secretion. An LRRNT domain is found at 40–68 (VCPTACICATDIVSCTNKNLSKVPGNLFR). Over 40-398 (VCPTACICAT…RSHAHEAFNT (359 aa)) the chain is Extracellular. 2 disulfide bridges follow: C41/C47 and C45/C54. N58 carries N-linked (GlcNAc...) asparagine glycosylation. LRR repeat units lie at residues 69–90 (LIKR…WIPV), 94–115 (KLNT…SFST), 118–139 (NLKC…VFQE), 142–163 (VLEV…AFGG), 166–187 (QLQK…LYVG), and 193–214 (ELMF…HINL). Residue N104 is glycosylated (N-linked (GlcNAc...) asparagine). Residues 228-284 (NPFVCDCSLYSLLVFWYRRHFSSVMDFKNDYTCRLWSDSRHSRQVLLLQDSFMNCSD) enclose the LRRCT domain. Intrachain disulfides connect C232–C260 and C234–C282. N-linked (GlcNAc...) asparagine glycans are attached at residues N281, N288, N345, N373, N381, and N384. One can recognise an Ig-like C2-type domain in the interval 289-379 (GSFRALGFIH…RLLNETVDVT (91 aa)). Cysteines 310 and 363 form a disulfide. The helical transmembrane segment at 399-419 (AFTTLAACVASIVLVLLYLYL) threads the bilayer. The Cytoplasmic segment spans residues 420 to 522 (TPCPCKCKTK…FSDTPFVAST (103 aa)). The tract at residues 501 to 522 (RGKSDSDSVNSVFSDTPFVAST) is disordered.

The protein belongs to the immunoglobulin superfamily. AMIGO family. As to quaternary structure, binds itself as well as AMIGO1 and AMIGO3. As to expression, highest levels in breast, ovary, cervix, and uterus. Lower levels in lung, colon, and rectum. Differentially expressed in 56% of thyroid, 57% of pancreatic and 45% of stomach cancers.

It is found in the cell membrane. It localises to the nucleus. Its function is as follows. Required for depolarization-dependent survival of cultured cerebellar granule neurons. May mediate homophilic as well as heterophilic cell-cell interaction with AMIGO1 or AMIGO3. May contribute to signal transduction through its intracellular domain. May be required for tumorigenesis of a subset of gastric adenocarcinomas. This Homo sapiens (Human) protein is Amphoterin-induced protein 2.